Consider the following 546-residue polypeptide: Chaperonin GroEL (546 aa).

ATP-binding positions include 30-33, K51, 87-91, G415, 479-481, and D495; these read TLGP, DGTTT, and NAA. Positions 526–546 are disordered; the sequence is KEDAPMPGGMPGGMGGMGMDM. The span at 534–546 shows a compositional bias: gly residues; it reads GMPGGMGGMGMDM.

It belongs to the chaperonin (HSP60) family. As to quaternary structure, forms a cylinder of 14 subunits composed of two heptameric rings stacked back-to-back. Interacts with the co-chaperonin GroES.

The protein localises to the cytoplasm. The enzyme catalyses ATP + H2O + a folded polypeptide = ADP + phosphate + an unfolded polypeptide.. Together with its co-chaperonin GroES, plays an essential role in assisting protein folding. The GroEL-GroES system forms a nano-cage that allows encapsulation of the non-native substrate proteins and provides a physical environment optimized to promote and accelerate protein folding. In Burkholderia thailandensis, this protein is Chaperonin GroEL.